The sequence spans 101 residues: MPFSHTKIVGPAGRYGARYGMGLRRKVTAIEVKQRGKHRCPSCRSLVRLERIAFGIWRCPKCGFTFAGGAWTPQTIMGKALAPEELKEVEAQKAKWKEAVK.

Residues cysteine 40, cysteine 43, cysteine 59, and cysteine 62 each coordinate Zn(2+). The segment at 40–62 adopts a C4-type zinc-finger fold; the sequence is CPSCRSLVRLERIAFGIWRCPKC.

It belongs to the eukaryotic ribosomal protein eL43 family. Putative zinc-binding subfamily. In terms of assembly, part of the 50S ribosomal subunit. Zn(2+) is required as a cofactor.

Functionally, binds to the 23S rRNA. This is Large ribosomal subunit protein eL43 from Pyrobaculum aerophilum (strain ATCC 51768 / DSM 7523 / JCM 9630 / CIP 104966 / NBRC 100827 / IM2).